Here is a 100-residue protein sequence, read N- to C-terminus: Osteocalcin (100 aa).

An N-terminal signal peptide occupies residues 1–23; sequence MRALTLLALLALAALCIAGQAGA. The propeptide occupies 24-51; it reads KPSGAESSKGAAFVSKQEGSEVVKRPRR. In terms of domain architecture, Gla spans 52-98; sequence YLYQWLGAPVPYPDPLEPRREVCELNPDCDELADHIGFQEAYRRFYG. Ca(2+) is bound by residues E68, E72, E75, and D81. Residue E68 is modified to 4-carboxyglutamate; partial. E72 and E75 each carry 4-carboxyglutamate. The cysteines at positions 74 and 80 are disulfide-linked.

This sequence belongs to the osteocalcin/matrix Gla protein family. Post-translationally, gamma-carboxyglutamate residues are formed by vitamin K dependent carboxylation by GGCX. These residues are essential for the binding of calcium. Decarboxylation promotes the hormone activity.

The protein localises to the secreted. Its function is as follows. Bone protein that constitutes 1-2% of the total bone protein, and which acts as a negative regulator of bone formation. Functions to limit bone formation without impairing bone resorption or mineralization. It binds strongly to apatite and calcium. The uncarboxylated form acts as a hormone secreted by osteoblasts, which regulates different cellular processes, such as energy metabolism, male fertility and brain development. Regulates of energy metabolism by acting as a hormone favoring pancreatic beta-cell proliferation, insulin secretion and sensitivity and energy expenditure. Uncarboxylated osteocalcin hormone also promotes testosterone production in the testes: acts as a ligand for G protein-coupled receptor GPRC6A at the surface of Leydig cells, initiating a signaling response that promotes the expression of enzymes required for testosterone synthesis in a CREB-dependent manner. Also acts as a regulator of brain development: osteocalcin hormone crosses the blood-brain barrier and acts as a ligand for GPR158 on neurons, initiating a signaling response that prevents neuronal apoptosis in the hippocampus, favors the synthesis of all monoamine neurotransmitters and inhibits that of gamma-aminobutyric acid (GABA). Osteocalcin also crosses the placenta during pregnancy and maternal osteocalcin is required for fetal brain development. The protein is Osteocalcin (BGLAP) of Homo sapiens (Human).